A 661-amino-acid polypeptide reads, in one-letter code: uncharacterized protein (661 aa).

Positions 1–24 (MKTLKTLKIFIIVFIASVSLASFA) are cleaved as a signal peptide. Transmembrane regions (helical) follow at residues 226 to 246 (IIGA…ALNT), 254 to 274 (IALF…LGPL), 410 to 430 (IILA…LYFI), 436 to 456 (CMIT…MALF), 469 to 489 (VCIS…LLIT), and 562 to 582 (VVSI…FYYF). The interval 629 to 661 (GKPLVGDKPGVGGKRKEGEQQGGDLASGSGGGK) is disordered.

This sequence belongs to the TrbL/VirB6 family.

The protein resides in the cell membrane. This is an uncharacterized protein from Rickettsia conorii (strain ATCC VR-613 / Malish 7).